Reading from the N-terminus, the 278-residue chain is Release factor glutamine methyltransferase (278 aa).

Residues 120–124 (GTGTG), D143, and N184 contribute to the S-adenosyl-L-methionine site. 184-187 (NPPY) is a binding site for substrate.

This sequence belongs to the protein N5-glutamine methyltransferase family. PrmC subfamily.

The enzyme catalyses L-glutaminyl-[peptide chain release factor] + S-adenosyl-L-methionine = N(5)-methyl-L-glutaminyl-[peptide chain release factor] + S-adenosyl-L-homocysteine + H(+). In terms of biological role, methylates the class 1 translation termination release factors RF1/PrfA and RF2/PrfB on the glutamine residue of the universally conserved GGQ motif. The polypeptide is Release factor glutamine methyltransferase (Deinococcus radiodurans (strain ATCC 13939 / DSM 20539 / JCM 16871 / CCUG 27074 / LMG 4051 / NBRC 15346 / NCIMB 9279 / VKM B-1422 / R1)).